The primary structure comprises 109 residues: Large ribosomal subunit protein uL22 (109 aa).

It belongs to the universal ribosomal protein uL22 family. In terms of assembly, part of the 50S ribosomal subunit.

In terms of biological role, this protein binds specifically to 23S rRNA; its binding is stimulated by other ribosomal proteins, e.g. L4, L17, and L20. It is important during the early stages of 50S assembly. It makes multiple contacts with different domains of the 23S rRNA in the assembled 50S subunit and ribosome. The globular domain of the protein is located near the polypeptide exit tunnel on the outside of the subunit, while an extended beta-hairpin is found that lines the wall of the exit tunnel in the center of the 70S ribosome. The polypeptide is Large ribosomal subunit protein uL22 (Paraburkholderia phymatum (strain DSM 17167 / CIP 108236 / LMG 21445 / STM815) (Burkholderia phymatum)).